The primary structure comprises 122 residues: MSETAQSYDPTEDFQALVVTDSAAARVAQLIAQEESDDLKLRVFVSGGGCSGFQYGFTFDERIEEGDSVVEKDGVTFLVDPMSSQYLMGAEIDFVEGIEGEQFVIRNPNATTTCGCGSSFSI.

Iron-sulfur cluster is bound by residues cysteine 50, cysteine 114, and cysteine 116.

This sequence belongs to the HesB/IscA family. In terms of assembly, homodimer. Requires iron-sulfur cluster as cofactor.

Functionally, required for insertion of 4Fe-4S clusters for at least IspG. In Alkalilimnicola ehrlichii (strain ATCC BAA-1101 / DSM 17681 / MLHE-1), this protein is Iron-sulfur cluster insertion protein ErpA.